The sequence spans 288 residues: Phosphate import ATP-binding protein PstB (288 aa).

Positions 42–283 (IRDLNFYYEN…PKEKKTRDYI (242 aa)) constitute an ABC transporter domain. 74–81 (GPSGCGKS) contacts ATP.

Belongs to the ABC transporter superfamily. Phosphate importer (TC 3.A.1.7) family. As to quaternary structure, the complex is composed of two ATP-binding proteins (PstB), two transmembrane proteins (PstC and PstA) and a solute-binding protein (PstS).

It is found in the cell membrane. The catalysed reaction is phosphate(out) + ATP + H2O = ADP + 2 phosphate(in) + H(+). Functionally, part of the ABC transporter complex PstSACB involved in phosphate import. Responsible for energy coupling to the transport system. This chain is Phosphate import ATP-binding protein PstB, found in Malacoplasma penetrans (strain HF-2) (Mycoplasma penetrans).